A 152-amino-acid chain; its full sequence is Cytochrome c-type biogenesis protein CcmE (152 aa).

Topologically, residues 1 to 8 are cytoplasmic; the sequence is MQARRKTR. A helical; Signal-anchor for type II membrane protein transmembrane segment spans residues 9-29; sequence LYIVLAVLAGLGLTVSLTLYA. Residues 30–152 are Periplasmic-facing; that stretch reads LSSNIDLFYT…MTPEKTGAQP (123 aa). 2 residues coordinate heme: His130 and Tyr134. Positions 133–152 are disordered; sequence NYTPPEVKNAMTPEKTGAQP.

This sequence belongs to the CcmE/CycJ family.

The protein resides in the cell inner membrane. Its function is as follows. Heme chaperone required for the biogenesis of c-type cytochromes. Transiently binds heme delivered by CcmC and transfers the heme to apo-cytochromes in a process facilitated by CcmF and CcmH. The chain is Cytochrome c-type biogenesis protein CcmE from Klebsiella pneumoniae (strain 342).